The primary structure comprises 400 residues: MLEFFSRLSLVTKIIIAIILGIGVALLFPTVTPYLSLFGELFIKALKSVAPILVFVLVLSSIANFQVGHSANLRPVLLLYVVGMLLAAFSAVIASLSFPSTLYLNTVSHNNLQAPGSLADILKNLLLSFIANPVQAISEANFIGILAWAIGLGLAMRHSSDTTKQVMQDVSHAVSAIIHKVIAFAPVGIFGLVAVTFADAGLATLESYAQLLAVLLGTMLFVALVINPILVGLTIRGNPYPLVFKCLKESGITAFFTRSSAANIPVNLDLAERLGVNPSTASVSIPLGATVNMAGAAVTITVLTLATVHTLGIHVDLATMIILSVVATISACGASGVAGGSLLLIPVACSLFGISSEIAMQVVAVGMIISVLQDSTETALNSSTDVLFTAAVDIRSRQNS.

The next 9 membrane-spanning stretches (helical) occupy residues 14 to 34 (IIIA…VTPY), 48 to 68 (SVAP…FQVG), 76 to 96 (VLLL…IASL), 136 to 156 (AISE…GLAM), 177 to 197 (IIHK…AVTF), 211 to 231 (LLAV…PILV), 285 to 305 (IPLG…VLTL), 311 to 331 (LGIH…TISA), and 349 to 371 (CSLF…IISV).

It belongs to the dicarboxylate/amino acid:cation symporter (DAACS) (TC 2.A.23) family.

It localises to the cell inner membrane. The catalysed reaction is L-serine(in) + Na(+)(in) = L-serine(out) + Na(+)(out). The enzyme catalyses L-threonine(in) + Na(+)(in) = L-threonine(out) + Na(+)(out). Its function is as follows. Involved in the import of serine and threonine into the cell, with the concomitant import of sodium (symport system). This Acinetobacter baumannii (strain ATCC 17978 / DSM 105126 / CIP 53.77 / LMG 1025 / NCDC KC755 / 5377) protein is Serine/threonine transporter SstT.